Consider the following 254-residue polypeptide: Type II methyl-directed restriction enzyme DpnI (254 aa).

This sequence belongs to the DpnI type II restriction endonuclease family.

The enzyme catalyses Endonucleolytic cleavage of DNA to give specific double-stranded fragments with terminal 5'-phosphates.. In terms of biological role, an M and P subtype restriction enzyme that recognizes the double-stranded, methylated sequence 5'-G(Me)ATC-3' and cleaves after A-2. The sequence is that of Type II methyl-directed restriction enzyme DpnI from Streptococcus pneumoniae serotype 4 (strain ATCC BAA-334 / TIGR4).